Here is a 369-residue protein sequence, read N- to C-terminus: Cytokine receptor common subunit gamma (369 aa).

An N-terminal signal peptide occupies residues 1–22 (MLKLLLSPRSFLVLQLLLLRAG). The Extracellular segment spans residues 23 to 263 (WSSKVLMSSA…ENPSLFALEA (241 aa)). C62 and C72 are joined by a disulfide. 4 N-linked (GlcNAc...) asparagine glycosylation sites follow: N71, N75, N84, and N96. C102 and C115 are disulfide-bonded. The Fibronectin type-III domain occupies 156-254 (APENLTLSNL…VHWGSHTVEE (99 aa)). N-linked (GlcNAc...) asparagine glycans are attached at residues N159 and N164. Residues 238–242 (WSKWS) carry the WSXWS motif motif. Residues 264 to 284 (VLIPVGTMGLIITLIFVYCWL) traverse the membrane as a helical segment. At 285–369 (ERMPPIPPIK…PPCYSLKPEA (85 aa)) the chain is on the cytoplasmic side. The Box 1 motif signature appears at 286 to 294 (RMPPIPPIK).

Belongs to the type I cytokine receptor family. Type 5 subfamily. The gamma subunit is common to the IL2, IL4, IL7, IL15, IL21 and probably also the IL13 receptors. Interacts with SHB upon interleukin stimulation. Interacts with IL9.

The protein localises to the cell membrane. Its subcellular location is the cell surface. Common subunit for the receptors for a variety of interleukins. Probably in association with IL15RA, involved in the stimulation of neutrophil phagocytosis by IL15. This Mus musculus (Mouse) protein is Cytokine receptor common subunit gamma (Il2rg).